A 162-amino-acid chain; its full sequence is MHLTDLIEKTLTAMGYELVEVERAPAGLLRVYIDQAENGVVIEDCEKVSHQLTRVFEVENVNYERLEVSSPGLDRPLRTLADFTRFAGLEAKVTLRLPVDGQKNFTGIIQAPTGEPGQERIGLEFEGKEGPALLGFTLSELDRARLVPVLDFKGNRNKGNKQ.

The protein belongs to the RimP family.

The protein resides in the cytoplasm. Its function is as follows. Required for maturation of 30S ribosomal subunits. This is Ribosome maturation factor RimP from Ralstonia pickettii (strain 12J).